The sequence spans 529 residues: Peptide chain release factor 3 (529 aa).

One can recognise a tr-type G domain in the interval 11–280 (NKRRTFAIIS…GLTEWAPKPQ (270 aa)). GTP contacts are provided by residues 20 to 27 (SHPDAGKT), 88 to 92 (DTPGH), and 142 to 145 (NKLD).

This sequence belongs to the TRAFAC class translation factor GTPase superfamily. Classic translation factor GTPase family. PrfC subfamily.

Its subcellular location is the cytoplasm. Its function is as follows. Increases the formation of ribosomal termination complexes and stimulates activities of RF-1 and RF-2. It binds guanine nucleotides and has strong preference for UGA stop codons. It may interact directly with the ribosome. The stimulation of RF-1 and RF-2 is significantly reduced by GTP and GDP, but not by GMP. This is Peptide chain release factor 3 from Mannheimia succiniciproducens (strain KCTC 0769BP / MBEL55E).